The sequence spans 208 residues: MKVVTFGGHFHHFREIYDVLHHDVVIVDDNHLDGVTENTFDNVNITHYKTNVDDNKNVSIAKTLIYIYSTVNDDVIVLDSDVYVPIRDKPLPNSPTIFCIPAVNWGNKKYVLYCDSTNVFVPRLYLNPLVDMLELYLKGDIDMPIDTYQSRYTIAFNKIVVPGTFHYLPSSPGDYANTKKWVVTSDDILSVNIANTWYSMLPCDYVLK.

This is an uncharacterized protein from Acidianus sp. F28 (AFV-2).